A 160-amino-acid polypeptide reads, in one-letter code: Small ribosomal subunit protein uS9 (160 aa).

It belongs to the universal ribosomal protein uS9 family.

This chain is Small ribosomal subunit protein uS9, found in Mesorhizobium japonicum (strain LMG 29417 / CECT 9101 / MAFF 303099) (Mesorhizobium loti (strain MAFF 303099)).